A 539-amino-acid polypeptide reads, in one-letter code: G protein-coupled receptor associated sorting protein 3 (539 aa).

The segment covering 1–10 (MTGSKNKARA) has biased composition (basic residues). 2 disordered regions span residues 1–112 (MTGS…NWFW) and 134–172 (VAKCENKPSTSIQARAEEPAPRTSHKSRSGAEEEEEENV). Basic and acidic residues-rich tracts occupy residues 66 to 80 (VVAETKEGARPESKA) and 88 to 106 (FNHRTENKFARSTRKDKPS). Residues 134–146 (VAKCENKPSTSIQ) are compositionally biased toward polar residues.

It belongs to the GPRASP family. In terms of assembly, homodimer.

It localises to the cytoplasm. Its subcellular location is the nucleus. Functionally, survival and differentiation promoting protein that plays a role in the regulation of neurosynaptogenesis. Induces phosphatase PP2A activity which results in APP dephosphorylation and inhibits BACE1-mediated processing of APP. This Mus musculus (Mouse) protein is G protein-coupled receptor associated sorting protein 3 (Gprasp3).